We begin with the raw amino-acid sequence, 144 residues long: 3-hydroxyacyl-[acyl-carrier-protein] dehydratase FabZ (144 aa).

His52 is a catalytic residue.

The protein belongs to the thioester dehydratase family. FabZ subfamily.

Its subcellular location is the cytoplasm. The enzyme catalyses a (3R)-hydroxyacyl-[ACP] = a (2E)-enoyl-[ACP] + H2O. Functionally, involved in unsaturated fatty acids biosynthesis. Catalyzes the dehydration of short chain beta-hydroxyacyl-ACPs and long chain saturated and unsaturated beta-hydroxyacyl-ACPs. The protein is 3-hydroxyacyl-[acyl-carrier-protein] dehydratase FabZ of Syntrophomonas wolfei subsp. wolfei (strain DSM 2245B / Goettingen).